The sequence spans 364 residues: Aminomethyltransferase (364 aa).

The protein belongs to the GcvT family. The glycine cleavage system is composed of four proteins: P, T, L and H.

It carries out the reaction N(6)-[(R)-S(8)-aminomethyldihydrolipoyl]-L-lysyl-[protein] + (6S)-5,6,7,8-tetrahydrofolate = N(6)-[(R)-dihydrolipoyl]-L-lysyl-[protein] + (6R)-5,10-methylene-5,6,7,8-tetrahydrofolate + NH4(+). The glycine cleavage system catalyzes the degradation of glycine. The protein is Aminomethyltransferase of Escherichia coli O17:K52:H18 (strain UMN026 / ExPEC).